The following is a 604-amino-acid chain: Glutamine--fructose-6-phosphate aminotransferase [isomerizing] (604 aa).

Catalysis depends on Cys-2, which acts as the Nucleophile; for GATase activity. The region spanning 2-219 (CGIMGAVSER…EGDSACVTTQ (218 aa)) is the Glutamine amidotransferase type-2 domain. 2 consecutive SIS domains span residues 279-427 (LRAS…DNRA) and 454-594 (LASL…VDQP). The active-site For Fru-6P isomerization activity is Lys-599.

Homodimer.

Its subcellular location is the cytoplasm. It carries out the reaction D-fructose 6-phosphate + L-glutamine = D-glucosamine 6-phosphate + L-glutamate. Its function is as follows. Catalyzes the first step in hexosamine metabolism, converting fructose-6P into glucosamine-6P using glutamine as a nitrogen source. In Legionella pneumophila subsp. pneumophila (strain Philadelphia 1 / ATCC 33152 / DSM 7513), this protein is Glutamine--fructose-6-phosphate aminotransferase [isomerizing].